Consider the following 120-residue polypeptide: Glycine cleavage system H protein (120 aa).

The region spanning 17–99 (IATVGITSHA…QGAGWFFKLK (83 aa)) is the Lipoyl-binding domain. Lys-58 is subject to N6-lipoyllysine.

This sequence belongs to the GcvH family. As to quaternary structure, the glycine cleavage system is composed of four proteins: P, T, L and H. The cofactor is (R)-lipoate.

Its function is as follows. The glycine cleavage system catalyzes the degradation of glycine. The H protein shuttles the methylamine group of glycine from the P protein to the T protein. In Agrobacterium fabrum (strain C58 / ATCC 33970) (Agrobacterium tumefaciens (strain C58)), this protein is Glycine cleavage system H protein.